The primary structure comprises 383 residues: Succinyl-diaminopimelate desuccinylase (383 aa).

H73 contacts Zn(2+). Residue D75 is part of the active site. D107 lines the Zn(2+) pocket. The Proton acceptor role is filled by E141. Residues E142, E170, and H356 each contribute to the Zn(2+) site.

This sequence belongs to the peptidase M20A family. DapE subfamily. Homodimer. Zn(2+) is required as a cofactor. It depends on Co(2+) as a cofactor.

The enzyme catalyses N-succinyl-(2S,6S)-2,6-diaminopimelate + H2O = (2S,6S)-2,6-diaminopimelate + succinate. It participates in amino-acid biosynthesis; L-lysine biosynthesis via DAP pathway; LL-2,6-diaminopimelate from (S)-tetrahydrodipicolinate (succinylase route): step 3/3. Its function is as follows. Catalyzes the hydrolysis of N-succinyl-L,L-diaminopimelic acid (SDAP), forming succinate and LL-2,6-diaminopimelate (DAP), an intermediate involved in the bacterial biosynthesis of lysine and meso-diaminopimelic acid, an essential component of bacterial cell walls. This Pseudomonas syringae pv. syringae (strain B728a) protein is Succinyl-diaminopimelate desuccinylase.